A 340-amino-acid polypeptide reads, in one-letter code: DNA-directed RNA polymerase subunit alpha (340 aa).

Residues 1–236 are alpha N-terminal domain (alpha-NTD); it reads MLSLSKNWNT…EQLQLFIAFE (236 aa). Residues 251–340 are alpha C-terminal domain (alpha-CTD); sequence FSPYLLKRVD…LSKRYEDSYN (90 aa).

It belongs to the RNA polymerase alpha chain family. In terms of assembly, homodimer. The RNAP catalytic core consists of 2 alpha, 1 beta, 1 beta' and 1 omega subunit. When a sigma factor is associated with the core the holoenzyme is formed, which can initiate transcription.

It carries out the reaction RNA(n) + a ribonucleoside 5'-triphosphate = RNA(n+1) + diphosphate. Functionally, DNA-dependent RNA polymerase catalyzes the transcription of DNA into RNA using the four ribonucleoside triphosphates as substrates. The polypeptide is DNA-directed RNA polymerase subunit alpha (Rickettsia typhi (strain ATCC VR-144 / Wilmington)).